Reading from the N-terminus, the 681-residue chain is Methionine--tRNA ligase (681 aa).

Residues 14 to 24 (PYANGSIHLGH) carry the 'HIGH' region motif. Positions 145, 148, 158, and 161 each coordinate Zn(2+). The 'KMSKS' region motif lies at 331 to 335 (KMSKS). An ATP-binding site is contributed by lysine 334. Positions 579–681 (AFAAVDLRIA…AGAKPGQRVH (103 aa)) constitute a tRNA-binding domain.

It belongs to the class-I aminoacyl-tRNA synthetase family. MetG type 1 subfamily. Homodimer. Zn(2+) serves as cofactor.

The protein resides in the cytoplasm. The enzyme catalyses tRNA(Met) + L-methionine + ATP = L-methionyl-tRNA(Met) + AMP + diphosphate. Functionally, is required not only for elongation of protein synthesis but also for the initiation of all mRNA translation through initiator tRNA(fMet) aminoacylation. The protein is Methionine--tRNA ligase of Azotobacter vinelandii (strain DJ / ATCC BAA-1303).